A 338-amino-acid chain; its full sequence is NADPH dehydrogenase (338 aa).

Residue 23 to 26 coordinates FMN; sequence SPMC. Tyr-28 contributes to the substrate binding site. 2 residues coordinate FMN: Ala-60 and Gln-102. A substrate-binding site is contributed by 163-166; the sequence is HGAH. Residues Arg-214 and 306 to 307 each bind FMN; that span reads AR.

Belongs to the NADH:flavin oxidoreductase/NADH oxidase family. NamA subfamily. Homotetramer. FMN is required as a cofactor.

The enzyme catalyses A + NADPH + H(+) = AH2 + NADP(+). Functionally, catalyzes the reduction of the double bond of an array of alpha,beta-unsaturated aldehydes and ketones. It also reduces the nitro group of nitroester and nitroaromatic compounds. It could have a role in detoxification processes. The chain is NADPH dehydrogenase from Halalkalibacterium halodurans (strain ATCC BAA-125 / DSM 18197 / FERM 7344 / JCM 9153 / C-125) (Bacillus halodurans).